Here is a 315-residue protein sequence, read N- to C-terminus: Methionyl-tRNA formyltransferase (315 aa).

113 to 116 (SLLP) provides a ligand contact to (6S)-5,6,7,8-tetrahydrofolate.

This sequence belongs to the Fmt family.

It catalyses the reaction L-methionyl-tRNA(fMet) + (6R)-10-formyltetrahydrofolate = N-formyl-L-methionyl-tRNA(fMet) + (6S)-5,6,7,8-tetrahydrofolate + H(+). Functionally, attaches a formyl group to the free amino group of methionyl-tRNA(fMet). The formyl group appears to play a dual role in the initiator identity of N-formylmethionyl-tRNA by promoting its recognition by IF2 and preventing the misappropriation of this tRNA by the elongation apparatus. In Shigella flexneri serotype 5b (strain 8401), this protein is Methionyl-tRNA formyltransferase.